The following is a 187-amino-acid chain: ATP synthase subunit delta, chloroplastic (187 aa).

The protein belongs to the ATPase delta chain family. As to quaternary structure, F-type ATPases have 2 components, F(1) - the catalytic core - and F(0) - the membrane proton channel. F(1) has five subunits: alpha(3), beta(3), gamma(1), delta(1), epsilon(1). CF(0) has four main subunits: a(1), b(1), b'(1) and c(10-14). The alpha and beta chains form an alternating ring which encloses part of the gamma chain. F(1) is attached to F(0) by a central stalk formed by the gamma and epsilon chains, while a peripheral stalk is formed by the delta, b and b' chains.

The protein resides in the plastid. It localises to the chloroplast thylakoid membrane. In terms of biological role, f(1)F(0) ATP synthase produces ATP from ADP in the presence of a proton or sodium gradient. F-type ATPases consist of two structural domains, F(1) containing the extramembraneous catalytic core and F(0) containing the membrane proton channel, linked together by a central stalk and a peripheral stalk. During catalysis, ATP synthesis in the catalytic domain of F(1) is coupled via a rotary mechanism of the central stalk subunits to proton translocation. This protein is part of the stalk that links CF(0) to CF(1). It either transmits conformational changes from CF(0) to CF(1) or is implicated in proton conduction. This is ATP synthase subunit delta, chloroplastic from Thalassiosira pseudonana (Marine diatom).